Here is a 279-residue protein sequence, read N- to C-terminus: MIKPGIILGNIICLSGGFFLALNEKLSKIFFLKTVFGLILIISSSCILNNIIDRDIDKKMNRTKNRFLCINTNVFLLKILFFFSIILLILGLLVFYIYINFLCTIISFFGFFFYVYLYSYLFKRKTYFSTFVGSVSGSLPPIIGYVAVNNCLNRCCTILFFMFSFWQIAHSYSIIIYRYSDYKLLNLPVFPILYGKLKTIIFISICILNLFFFNFLLYFFGYVKFFYFLYTSFFIFLWFIFSFLSNSRYFTIKIWSRIMFFFSIFIIFMISFLMSLNNF.

9 helical membrane-spanning segments follow: residues 1–21 (MIKPGIILGNIICLSGGFFLA), 29–49 (IFFLKTVFGLILIISSSCILN), 79–99 (ILFFFSIILLILGLLVFYIYI), 101–121 (FLCTIISFFGFFFYVYLYSYL), 128–148 (FSTFVGSVSGSLPPIIGYVAV), 156–176 (CTILFFMFSFWQIAHSYSIII), 200–220 (IIFISICILNLFFFNFLLYFF), 225–245 (FFYFLYTSFFIFLWFIFSFLS), and 254–274 (IWSRIMFFFSIFIIFMISFLM).

The protein belongs to the UbiA prenyltransferase family. Protoheme IX farnesyltransferase subfamily.

It localises to the cell membrane. The enzyme catalyses heme b + (2E,6E)-farnesyl diphosphate + H2O = Fe(II)-heme o + diphosphate. The protein operates within porphyrin-containing compound metabolism; heme O biosynthesis; heme O from protoheme: step 1/1. Converts heme B (protoheme IX) to heme O by substitution of the vinyl group on carbon 2 of heme B porphyrin ring with a hydroxyethyl farnesyl side group. The chain is Protoheme IX farnesyltransferase from Buchnera aphidicola subsp. Cinara cedri (strain Cc).